The following is a 292-amino-acid chain: Homoserine kinase (292 aa).

Position 84 to 94 (84 to 94 (PFSRGLGSSSA)) interacts with ATP.

The protein belongs to the GHMP kinase family. Homoserine kinase subfamily.

It localises to the cytoplasm. It catalyses the reaction L-homoserine + ATP = O-phospho-L-homoserine + ADP + H(+). The protein operates within amino-acid biosynthesis; L-threonine biosynthesis; L-threonine from L-aspartate: step 4/5. Catalyzes the ATP-dependent phosphorylation of L-homoserine to L-homoserine phosphate. The protein is Homoserine kinase of Campylobacter hominis (strain ATCC BAA-381 / DSM 21671 / CCUG 45161 / LMG 19568 / NCTC 13146 / CH001A).